The primary structure comprises 424 residues: Sulfate adenylyltransferase (424 aa).

It belongs to the sulfate adenylyltransferase family.

It carries out the reaction sulfate + ATP + H(+) = adenosine 5'-phosphosulfate + diphosphate. The protein operates within sulfur metabolism; hydrogen sulfide biosynthesis; sulfite from sulfate: step 1/3. The chain is Sulfate adenylyltransferase from Desulfatibacillum aliphaticivorans.